The sequence spans 347 residues: Holliday junction branch migration complex subunit RuvB (347 aa).

A large ATPase domain (RuvB-L) region spans residues 1–183 (MSEERFVSGH…FGVVLQLQFY (183 aa)). ATP-binding positions include Leu22, Arg23, Gly64, Lys67, Thr68, Thr69, 130–132 (EDF), Arg173, Tyr183, and Arg220. Residue Thr68 coordinates Mg(2+). The segment at 184–254 (SEEELTRILM…VADAGLRMMG (71 aa)) is small ATPAse domain (RuvB-S). A head domain (RuvB-H) region spans residues 257 to 347 (AMGLDTVDHK…PEGPVQPRLF (91 aa)). Residues Arg312 and Arg317 each contribute to the DNA site.

This sequence belongs to the RuvB family. In terms of assembly, homohexamer. Forms an RuvA(8)-RuvB(12)-Holliday junction (HJ) complex. HJ DNA is sandwiched between 2 RuvA tetramers; dsDNA enters through RuvA and exits via RuvB. An RuvB hexamer assembles on each DNA strand where it exits the tetramer. Each RuvB hexamer is contacted by two RuvA subunits (via domain III) on 2 adjacent RuvB subunits; this complex drives branch migration. In the full resolvosome a probable DNA-RuvA(4)-RuvB(12)-RuvC(2) complex forms which resolves the HJ.

It localises to the cytoplasm. It carries out the reaction ATP + H2O = ADP + phosphate + H(+). Its function is as follows. The RuvA-RuvB-RuvC complex processes Holliday junction (HJ) DNA during genetic recombination and DNA repair, while the RuvA-RuvB complex plays an important role in the rescue of blocked DNA replication forks via replication fork reversal (RFR). RuvA specifically binds to HJ cruciform DNA, conferring on it an open structure. The RuvB hexamer acts as an ATP-dependent pump, pulling dsDNA into and through the RuvAB complex. RuvB forms 2 homohexamers on either side of HJ DNA bound by 1 or 2 RuvA tetramers; 4 subunits per hexamer contact DNA at a time. Coordinated motions by a converter formed by DNA-disengaged RuvB subunits stimulates ATP hydrolysis and nucleotide exchange. Immobilization of the converter enables RuvB to convert the ATP-contained energy into a lever motion, pulling 2 nucleotides of DNA out of the RuvA tetramer per ATP hydrolyzed, thus driving DNA branch migration. The RuvB motors rotate together with the DNA substrate, which together with the progressing nucleotide cycle form the mechanistic basis for DNA recombination by continuous HJ branch migration. Branch migration allows RuvC to scan DNA until it finds its consensus sequence, where it cleaves and resolves cruciform DNA. In Symbiobacterium thermophilum (strain DSM 24528 / JCM 14929 / IAM 14863 / T), this protein is Holliday junction branch migration complex subunit RuvB.